A 364-amino-acid polypeptide reads, in one-letter code: Spermidine/putrescine import ATP-binding protein PotA (364 aa).

Residues 5 to 235 (LSLKSVSKSY…PVNRFVADFI (231 aa)) enclose the ABC transporter domain. An ATP-binding site is contributed by 37-44 (GPSGCGKT).

This sequence belongs to the ABC transporter superfamily. Spermidine/putrescine importer (TC 3.A.1.11.1) family. In terms of assembly, the complex is composed of two ATP-binding proteins (PotA), two transmembrane proteins (PotB and PotC) and a solute-binding protein (PotD).

The protein resides in the cell membrane. It carries out the reaction ATP + H2O + polyamine-[polyamine-binding protein]Side 1 = ADP + phosphate + polyamineSide 2 + [polyamine-binding protein]Side 1.. In terms of biological role, part of the ABC transporter complex PotABCD involved in spermidine/putrescine import. Responsible for energy coupling to the transport system. This chain is Spermidine/putrescine import ATP-binding protein PotA, found in Staphylococcus aureus (strain USA300).